A 122-amino-acid chain; its full sequence is Large ribosomal subunit protein uL14 (122 aa).

It belongs to the universal ribosomal protein uL14 family. In terms of assembly, part of the 50S ribosomal subunit. Forms a cluster with proteins L3 and L19. In the 70S ribosome, L14 and L19 interact and together make contacts with the 16S rRNA in bridges B5 and B8.

Functionally, binds to 23S rRNA. Forms part of two intersubunit bridges in the 70S ribosome. The protein is Large ribosomal subunit protein uL14 of Rickettsia massiliae (strain Mtu5).